We begin with the raw amino-acid sequence, 318 residues long: MFGVTLAELSASLGDPVLALGLAAFALLLLAIPISFWMVSGGSNSAVVTLLVALANLVLTAQLVLRWWQSGHFPISNLYESLCFLAWACTLAQLLVERSLSSPIVSAAATPMALLCVAFASFALPETLQEASPLVPALRSSWLVMHVSVIMCSYAALLVGSFLSMAVLFTDRQQTLELRSSSIGTGGFRQAKLATSAIDQNDGLRLSSINLSRTEQLDSLSYRTITVGFLLLTLGLISGAVWANEAWGSWWSWDPKETWALICWMVYAAYLHTRFSRGWSGRRPALVAVAGIVVIVVCYIGVNLLGIGLHSYGWFFEA.

The next 8 helical transmembrane spans lie at 17–37 (VLAL…ISFW), 45–65 (SAVV…QLVL), 75–95 (ISNL…AQLL), 104–124 (IVSA…SFAL), 149–169 (VIMC…AVLF), 224–244 (TITV…VWAN), 258–275 (TWAL…HTRF), and 287–307 (VAVA…LLGI).

This sequence belongs to the CcmF/CycK/Ccl1/NrfE/CcsA family. In terms of assembly, may interact with ccs1.

The protein resides in the cellular thylakoid membrane. In terms of biological role, required during biogenesis of c-type cytochromes (cytochrome c6 and cytochrome f) at the step of heme attachment. In Prochlorococcus marinus (strain MIT 9303), this protein is Cytochrome c biogenesis protein CcsA.